Consider the following 379-residue polypeptide: Chaperone protein DnaJ (379 aa).

The J domain maps to 5–70 (DYYEILGLDK…QKKAQYDQFG (66 aa)). The segment at 135–217 (GVEKEISVTR…CRGKGIVRKH (83 aa)) adopts a CR-type zinc-finger fold. Positions 148, 151, 165, 168, 191, 194, 205, and 208 each coordinate Zn(2+). 4 CXXCXGXG motif repeats span residues 148-155 (CETCNGTG), 165-172 (CDKCNGTG), 191-198 (CDKCGGRG), and 205-212 (CEECRGKG).

The protein belongs to the DnaJ family. Homodimer. It depends on Zn(2+) as a cofactor.

The protein localises to the cytoplasm. Functionally, participates actively in the response to hyperosmotic and heat shock by preventing the aggregation of stress-denatured proteins and by disaggregating proteins, also in an autonomous, DnaK-independent fashion. Unfolded proteins bind initially to DnaJ; upon interaction with the DnaJ-bound protein, DnaK hydrolyzes its bound ATP, resulting in the formation of a stable complex. GrpE releases ADP from DnaK; ATP binding to DnaK triggers the release of the substrate protein, thus completing the reaction cycle. Several rounds of ATP-dependent interactions between DnaJ, DnaK and GrpE are required for fully efficient folding. Also involved, together with DnaK and GrpE, in the DNA replication of plasmids through activation of initiation proteins. The sequence is that of Chaperone protein DnaJ from Clostridium kluyveri (strain ATCC 8527 / DSM 555 / NBRC 12016 / NCIMB 10680 / K1).